Reading from the N-terminus, the 201-residue chain is Potassium-transporting ATPase KdpC subunit (201 aa).

A helical membrane pass occupies residues Val-10 to Ile-30. Positions His-67–Ala-105 are disordered. A compositionally biased stretch (low complexity) spans Pro-70–Thr-82. Polar residues predominate over residues Lys-83 to Ala-105.

It belongs to the KdpC family. As to quaternary structure, the system is composed of three essential subunits: KdpA, KdpB and KdpC.

It is found in the cell inner membrane. Part of the high-affinity ATP-driven potassium transport (or Kdp) system, which catalyzes the hydrolysis of ATP coupled with the electrogenic transport of potassium into the cytoplasm. This subunit acts as a catalytic chaperone that increases the ATP-binding affinity of the ATP-hydrolyzing subunit KdpB by the formation of a transient KdpB/KdpC/ATP ternary complex. The chain is Potassium-transporting ATPase KdpC subunit from Rhodopseudomonas palustris (strain BisB5).